The following is a 447-amino-acid chain: Tubulin beta-1 chain (447 aa).

Gln11, Glu69, Ser138, Gly142, Thr143, Gly144, Asn204, and Asn226 together coordinate GTP. Mg(2+) is bound at residue Glu69.

Belongs to the tubulin family. In terms of assembly, dimer of alpha and beta chains. A typical microtubule is a hollow water-filled tube with an outer diameter of 25 nm and an inner diameter of 15 nM. Alpha-beta heterodimers associate head-to-tail to form protofilaments running lengthwise along the microtubule wall with the beta-tubulin subunit facing the microtubule plus end conferring a structural polarity. Microtubules usually have 13 protofilaments but different protofilament numbers can be found in some organisms and specialized cells. Mg(2+) serves as cofactor.

The protein localises to the cytoplasm. Its subcellular location is the cytoskeleton. In terms of biological role, tubulin is the major constituent of microtubules, a cylinder consisting of laterally associated linear protofilaments composed of alpha- and beta-tubulin heterodimers. Microtubules grow by the addition of GTP-tubulin dimers to the microtubule end, where a stabilizing cap forms. Below the cap, tubulin dimers are in GDP-bound state, owing to GTPase activity of alpha-tubulin. In Emericella nidulans (strain FGSC A4 / ATCC 38163 / CBS 112.46 / NRRL 194 / M139) (Aspergillus nidulans), this protein is Tubulin beta-1 chain (benA).